The following is a 70-amino-acid chain: Small ribosomal subunit protein bS21 (70 aa).

Belongs to the bacterial ribosomal protein bS21 family.

The sequence is that of Small ribosomal subunit protein bS21 from Neisseria gonorrhoeae (strain ATCC 700825 / FA 1090).